The sequence spans 300 residues: Tyrosine recombinase XerC (300 aa).

The region spanning E2–L88 is the Core-binding (CB) domain. Positions K109–L294 constitute a Tyr recombinase domain. Catalysis depends on residues R149, K173, H246, R249, and H272. Residue Y281 is the O-(3'-phospho-DNA)-tyrosine intermediate of the active site.

Belongs to the 'phage' integrase family. XerC subfamily. Forms a cyclic heterotetrameric complex composed of two molecules of XerC and two molecules of XerD.

Its subcellular location is the cytoplasm. Site-specific tyrosine recombinase, which acts by catalyzing the cutting and rejoining of the recombining DNA molecules. The XerC-XerD complex is essential to convert dimers of the bacterial chromosome into monomers to permit their segregation at cell division. It also contributes to the segregational stability of plasmids. This Anoxybacillus flavithermus (strain DSM 21510 / WK1) protein is Tyrosine recombinase XerC.